Reading from the N-terminus, the 700-residue chain is Elongation factor G 2 (700 aa).

Residues 8–290 (ERYRNIGISA…AVIDFLPSPV (283 aa)) enclose the tr-type G domain. Residues 17 to 24 (AHIDAGKT), 88 to 92 (DTPGH), and 142 to 145 (NKMD) contribute to the GTP site.

Belongs to the TRAFAC class translation factor GTPase superfamily. Classic translation factor GTPase family. EF-G/EF-2 subfamily.

Its subcellular location is the cytoplasm. Functionally, catalyzes the GTP-dependent ribosomal translocation step during translation elongation. During this step, the ribosome changes from the pre-translocational (PRE) to the post-translocational (POST) state as the newly formed A-site-bound peptidyl-tRNA and P-site-bound deacylated tRNA move to the P and E sites, respectively. Catalyzes the coordinated movement of the two tRNA molecules, the mRNA and conformational changes in the ribosome. This chain is Elongation factor G 2, found in Burkholderia mallei (strain ATCC 23344).